Consider the following 380-residue polypeptide: Cytochrome b (380 aa).

Transmembrane regions (helical) follow at residues 34 to 54 (FGSL…LLAM), 78 to 99 (WLIR…YLHI), 114 to 134 (WNIG…GYVL), and 179 to 199 (FFAL…VHLT). The heme b site is built by His-84 and His-98. Residues His-183 and His-197 each contribute to the heme b site. A ubiquinone is bound at residue His-202. A run of 4 helical transmembrane segments spans residues 227 to 247 (IKDM…ALFS), 289 to 309 (LGGV…PLLH), 321 to 341 (LLPF…WVGS), and 348 to 368 (FIII…VLFP).

The protein belongs to the cytochrome b family. The cytochrome bc1 complex contains 11 subunits: 3 respiratory subunits (MT-CYB, CYC1 and UQCRFS1), 2 core proteins (UQCRC1 and UQCRC2) and 6 low-molecular weight proteins (UQCRH/QCR6, UQCRB/QCR7, UQCRQ/QCR8, UQCR10/QCR9, UQCR11/QCR10 and a cleavage product of UQCRFS1). This cytochrome bc1 complex then forms a dimer. Heme b serves as cofactor.

It localises to the mitochondrion inner membrane. Functionally, component of the ubiquinol-cytochrome c reductase complex (complex III or cytochrome b-c1 complex) that is part of the mitochondrial respiratory chain. The b-c1 complex mediates electron transfer from ubiquinol to cytochrome c. Contributes to the generation of a proton gradient across the mitochondrial membrane that is then used for ATP synthesis. This is Cytochrome b (MT-CYB) from Gymnorhina tibicen (Australian magpie).